A 5405-amino-acid polypeptide reads, in one-letter code: MGALWSWWILWAGATLLWGLTQEASVDLKNTGREEFLTAFLQNYQLAYSKAYPRLLISSLSESPASVSILSQADNTSKKVTVRPGESVMVNISAKAEMIGSKIFQHAVVIHSDYAISVQALNAKPDTAELTLLRPIQALGTEYFVLTPPGTSARNVKEFAVVAGAAGASVSVTLKGSVTFNGKFYPAGDVLRVTLQPYNVAQLQSSVDLSGSKVTASSPVAVLSGHSCAQKHTTCNHVVEQLLPTSAWGTHYVVPTLASQSRYDLAFVVASQATKLTYNHGGITGSRGLQAGDVVEFEVRPSWPLYLSANVGIQVLLFGTGAIRNEVTYDPYLVLIPDVAAYCPAYVVKSVPGCEGVALVVAQTKAISGLTIDGHAVGAKLTWEAVPGSEFSYAEVELGTADMIHTAEATTNLGLLTFGLAKAIGYATAADCGRTVLSPVEPSCEGMQCAAGQRCQVVGGKAGCVAESTAVCRAQGDPHYTTFDGRRYDMMGTCSYTMVELCSEDDTLPAFSVEAKNEHRGSRRVSYVGLVTVRAYSHSVSLTRGEVGFVLVDNQRSRLPVSLSEGRLRVYQSGPRAVVELVFGLVVTYDWDCQLALSLPARFQDQVCGLCGNYNGDPADDFLTPDGALAPDAVEFASSWKLDDGDYLCEDGCQNNCPACTPGQAQHYEGDRLCGMLTKLDGPFAVCHDTLDPRPFLEQCVYDLCVVGGERLSLCRGLSAYAQACLELGISVGDWRSPANCPLSCPANSRYELCGPACPTSCNGAAAPSNCSGRPCVEGCVCLPGFVASGGACVPASSCGCTFQGLQLAPGQEVWADELCQRRCTCNGATHQVTCRDKQSCPAGERCSVQNGLLGCYPDRFGTCQGSGDPHYVSFDGRRFDFMGTCTYLLVGSCGQNAALPAFRVLVENEHRGSQTVSYTRAVRVEARGVKVAVRREYPGQVLVDDVLQYLPFQAADGQVQVFRQGRDAVVRTDFGLTVTYDWNARVTAKVPSSYAEALCGLCGNFNGDPADDLALRGGGQAANALAFGNSWQEETRPGCGATEPGDCPKLDSLVAQQLQSKNECGILADPKGPFRECHSKLDPQGAVRDCVYDRCLLPGQSGPLCDALATYAAACQAAGATVHPWRSEELCPLSCPPHSHYEACSYGCPLSCGDLPVPGGCGSECHEGCVCDEGFALSGESCLPLASCGCVHQGTYHPPGQTFYPGPGCDSLCHCQEGGLVSCESSSCGPHEACQPSGGSLGCVAVGSSTCQASGDPHYTTFDGRRFDFMGTCVYVLAQTCGTRPGLHRFAVLQENVAWGNGRVSVTRVITVQVANFTLRLEQRQWKVTVNGVDMKLPVVLANGQIRASQHGSDVVIETDFGLRVAYDLVYYVRVTVPGNYYQQMCGLCGNYNGDPKDDFQKPNGSQAGNANEFGNSWEEVVPDSPCLPPTPCPPGSEDCIPSHKCPPELEKKYQKEEFCGLLSSPTGPLSSCHKLVDPQGPLKDCIFDLCLGGGNLSILCSNIHAYVSACQAAGGHVEPWRTETFCPMECPPNSHYELCADTCSLGCSALSAPPQCQDGCAEGCQCDSGFLYNGQACVPIQQCGCYHNGVYYEPEQTVLIDNCRQQCTCHAGKGMVCQEHSCKPGQVCQPSGGILSCVTKDPCHGVTCRPQETCKEQGGQGVCLPNYEATCWLWGDPHYHSFDGRKFDFQGTCNYVLATTGCPGVSTQGLTPFTVTTKNQNRGNPAVSYVRVVTVAALGTNISIHKDEIGKVRVNGVLTALPVSVADGRISVTQGASKALLVADFGLQVSYDWNWRVDVTLPSSYHGAVCGLCGNMDRNPNNDQVFPNGTLAPSIPIWGGSWRAPGWDPLCWDECRGSCPTCPEDRLEQYEGPGFCGPLAPGTGGPFTTCHAHVPPESFFKGCVLDVCMGGGDRDILCKALASYVAACQAAGVVIEDWRAQVGCEITCPENSHYEVCGSPCPASCPSPAPLTTPAVCEGPCVEGCQCDAGFVLSADRCVPLNNGCGCWANGTYHEAGSEFWADGTCSQWCRCGPGGGSLVCTPASCGLGEVCGLLPSGQHGCQPVSTAECQAWGDPHYVTLDGHRFNFQGTCEYLLSAPCHGPPLGAENFTVTVANEHRGSQAVSYTRSVTLQIYNHSLTLSARWPRKLQVDGVFVTLPFQLDSLLHAHLSGADVVVTTTSGLSLAFDGDSFVRLRVPAAYAGSLCGLCGNYNQDPADDLKAVGGKPAGWQVGGAQGCGECVSKPCPSPCTPEQQESFGGPDACGVISATDGPLAPCHGLVPPAQYFQGCLLDACQVQGHPGGLCPAVATYVAACQAAGAQLREWRRPDFCPFQCPAHSHYELCGDSCPGSCPSLSAPEGCESACREGCVCDAGFVLSGDTCVPVGQCGCLHDDRYYPLGQTFYPGPGCDSLCRCREGGEVSCEPSSCGPHETCRPSGGSLGCVAVGSTTCQASGDPHYTTFDGRRFDFMGTCVYVLAQTCGTRPGLHRFAVLQENVAWGNGRVSVTRVITVQVANFTLRLEQRQWKVTVNGVDMKLPVVLANGQIRASQHGSDVVIETDFGLRVAYDLVYYVRVTVPGNYYQLMCGLCGNYNGDPKDDFQKPNGSQAGNANEFGNSWEEVVPDSPCLPPPTCPPGSEGCIPSEECPPELEKKYQKEEFCGLLSSPTGPLSSCHKLVDPQGPLKDCIFDLCLGGGNLSILCSNIHAYVSACQAAGGQVEPWRNETFCPMECPQNSHYELCADTCSLGCSALSAPLQCPDGCAEGCQCDSGFLYNGQACVPIQQCGCYHNGAYYEPEQTVLIDNCRQQCTCHVGKVVVCQEHSCKPGQVCQPSGGILSCVNKDPCHGVTCRPQETCKEQGGQGVCLPNYEATCWLWGDPHYHSFDGRKFDFQGTCNYVLATTGCPGVSTQGLTPFTVTTKNQNRGNPAVSYVRVVTVAALGTNISIHKDEIGKVRVNGVLTALPVSVADGRISVTQGASKALLVADFGLQVSYDWNWRVDVTLPSSYHGAVCGLCGNMDRNPNNDQVFPNGTLAPSIPIWGGSWRAPGWDPLCWDECRGSCPTCPEDRLEQYEGPGFCGPLAPGTGGPFTTCHAHVPPESFFKGCVLDVCMGGGDRDILCKALASYVAACQAAGVVIEDWRAQVGCEITCPENSHYEVCGPPCPASCPSPAPLTTPAVCEGPCVEGCQCDAGFVLSADRCVPLNNGCGCWANGTYHEAGSEFWADGTCSQWCRCGPGGGSLVCTPASCGLGEVCGLLPSGQHGCQPVSTAECQAWGDPHYVTLDGHRFDFQGTCEYLLSAPCHGPPLGAENFTVTVANEHRGSQAVSYTRSVTLQIYNHSLTLSARWPRKLQVDGVFVTLPFQLDSLLHAHLSGADVVVTTTSGLSLAFDGDSFVRLRVPAAYAGSLCGLCGNYNQDPADDLKAVGGKPAGWQVGGAQGCGECVSKPCPSPCTPEQQESFGGPDACGVISATDGPLAPCHGLVPPAQYFQGCLLDACQVQGHPGGLCPAVATYVAACQAAGAQLREWRRPDFCPFQCPAHSHYELCGDSCPGSCPSLSAPEGCESACREGCVCDAGFVLSGDTCVPVGQCGCLHDDRYYPLGQTFYPGPGCDSLCRCREGGEVSCEPSSCGPHETCRPSGGSLGCVAVGSTTCQASGDPHYTTFDGHRFDFMGTCVYVLAQTCGTRPGLHRFAVLQENVAWGNGRVSVTRVITVQVANFTLRLEQRQWKVTVNGVDMKLPVVLANGQIRASQHGSDVVIETDFGLRVAYDLVYYVRVTVPGNYYQLMCGLCGNYNGDPKDDFQKPNGSQAGNANEFGNSWEEVVPDSPCLPPPTCPPGSAGCIPSDKCPPELEKKYQKEEFCGLLSSPTGPLSSCHKLVDPQGPLKDCIFDLCLGGGNLSILCSNIHAYVSACQAAGGHVEPWRNETFCPMECPQNSHYELCADTCSLGCSALSAPLQCPDGCAEGCQCDSGFLYNGQACVPIQQCGCYHNGVYYEPEQTVLIDNCRQQCTCHVGKVVVCQEHSCKPGQVCQPSGGILSCVTKDPCHGVTCRPQETCKEQGGQGVCLPNYEATCWLWGDPHYHSFDGRKFDFQGTCNYVLATTGCPGVSTQGLTPFTVTTKNQNRGNPAVSYVRVVTVAALGTNISIHKDEIGKVRVNGVLTALPVSVADGRISVAQGASKALLVADFGLQVSYDWNWRVDVTLPSSYHGAVCGLCGNMDRNPNNDQVFPNGTLAPSIPIWGGSWRAPGWDPLCWDECRGSCPTCPEDRLEQYEGPGFCGPLSSGTGGPFTTCHAHVPPESFFKGCVLDVCMGGGDRDILCKALASYVAACQAAGVVIEDWRAQVGCEITCPENSHYEVCGPPCPASCPSPAPLTTPAVCEGPCVEGCQCDAGFVLSADRCVPLNNGCGCWANGTYHEAGSEFWADGTCSQWCRCGPGGGSLVCTPASCGLGEVCGLLPSGQHGCQPVSTAECQAWGDPHYVTLDGHRFDFQGTCEYLLSAPCHGPPLGAENFTVTVANEHRGSQAVSYTRSVTLQIYNHSLTLSARWPRKLQVDGVFVALPFQLDSLLHAHLSGADVVVTTTSGLSLAFDGDSFVRLRVPAAYAASLCGLCGNYNQDPADDLKAVGGKPAGWQVGGAQGCGECVSKPCPSPCTPEQQESFGGPDACGVISATDGPLAPCHGLVPPAQYFQGCLLDACQVQGHPGGLCPAVATYVAACQAAGAQLGEWRRPDFCPLQCPAHSHYELCGDSCPVSCPSLSAPEGCESACREGCVCDAGFVLSGDTCVPVGQCGCLHDGRYYPLGEVFYPGPECERRCECGPGGHVTCQEGAACGPHEECRLEDGVQACHATGCGRCLANGGIHYITLDGRVYDLHGSCSYVLAQVCHPKPGDEDFSIVLEKNAAGDLQRLLVTVAGQVVSLAQGQQVTVDGEAVALPVAVGRVRVTAEGRNMVLQTTKGLRLLFDGDAHLLMSIPSPFRGRLCGLCGNFNGNWSDDFVLPNGSAASSVETFGAAWRAPGSSKGCGEGCGPQGCPVCLAEETAPYESNEACGQLRNPQGPFATCQAVLSPSEYFRQCVYDLCAQKGDKAFLCRSLAAYTAACQAAGVAVKPWRTDSFCPLHCPAHSHYSICTRTCQGSCAALSGLTGCTTRCFEGCECDDRFLLSQGVCIPVQDCGCTHNGRYLPVNSSLLTSDCSERCSCSSSSGLTCQAAGCPPGRVCEVKAEARNCWATRGLCVLSVGANLTTFDGARGATTSPGVYELSSRCPGLQNTIPWYRVVAEVQICHGKTEAVGQVHIFFQDGMVTLTPNKGVWVNGLRVDLPAEKLASVSVSRTPDGSLLVRQKAGVQVWLGANGKVAVIVSNDHAGKLCGACGNFDGDQTNDWHDSQEKPAMEKWRAQDFSPCYG.

An N-terminal signal peptide occupies residues 1–23 (MGALWSWWILWAGATLLWGLTQE). The tract at residues 24-450 (ASVDLKNTGR…EPSCEGMQCA (427 aa)) is igGFc-binding. Residues Asn75 and Asn91 are each glycosylated (N-linked (GlcNAc...) asparagine). Residues 470–650 (AVCRAQGDPH…KLDDGDYLCE (181 aa)) enclose the VWFD 1 domain. 2 cysteine pairs are disulfide-bonded: Cys472–Cys611 and Cys494–Cys649. In terms of domain architecture, TIL 1 spans 745–799 (CPANSRYELCGPACPTSCNGAAAPSNCSGRPCVEGCVCLPGFVASGGACVPASSC). The VWFD 2 domain maps to 862 to 1041 (GTCQGSGDPH…WQEETRPGCG (180 aa)). Cystine bridges form between Cys864–Cys1003 and Cys886–Cys1040. The 54-residue stretch at 1136 to 1189 (CPPHSHYEACSYGCPLSCGDLPVPGGCGSECHEGCVCDEGFALSGESCLPLASC) folds into the TIL 2 domain. Residues 1250–1429 (STCQASGDPH…EEVVPDSPCL (180 aa)) enclose the VWFD 3 domain. 2 disulfides stabilise this stretch: Cys1252–Cys1390 and Cys1274–Cys1428. A glycan (N-linked (GlcNAc...) (complex) asparagine) is linked at Asn1317. Residues 1532-1585 (CPPNSHYELCADTCSLGCSALSAPPQCQDGCAEGCQCDSGFLYNGQACVPIQQC) form the TIL 3 domain. In terms of domain architecture, VWFD 4 spans 1671–1854 (ATCWLWGDPH…RAPGWDPLCW (184 aa)). 3 cysteine pairs are disulfide-bonded: Cys1673–Cys1815, Cys1695–Cys1853, and Cys1704–Cys1812. N-linked (GlcNAc...) asparagine glycosylation is present at Asn1743. Residues 1950 to 2007 (CPENSHYEVCGSPCPASCPSPAPLTTPAVCEGPCVEGCQCDAGFVLSADRCVPLNNGC) form the TIL 4 domain. Residues 2070–2253 (AECQAWGDPH…VSKPCPSPCT (184 aa)) form the VWFD 5 domain. 2 cysteine pairs are disulfide-bonded: Cys2072-Cys2211 and Cys2094-Cys2252. Asn2138 carries an N-linked (GlcNAc...) asparagine glycan. The region spanning 2337 to 2390 (CPAHSHYELCGDSCPGSCPSLSAPEGCESACREGCVCDAGFVLSGDTCVPVGQC) is the TIL 5 domain. The VWFD 6 domain maps to 2451–2630 (TTCQASGDPH…EEVVPDSPCL (180 aa)). Intrachain disulfides connect Cys2453–Cys2591 and Cys2475–Cys2629. N-linked (GlcNAc...) asparagine glycosylation is present at Asn2518. The TIL 6 domain maps to 2733–2786 (CPQNSHYELCADTCSLGCSALSAPLQCPDGCAEGCQCDSGFLYNGQACVPIQQC). A VWFD 7 domain is found at 2872–3055 (ATCWLWGDPH…RAPGWDPLCW (184 aa)). 3 cysteine pairs are disulfide-bonded: Cys2874-Cys3016, Cys2896-Cys3054, and Cys2905-Cys3013. The region spanning 3151–3208 (CPENSHYEVCGPPCPASCPSPAPLTTPAVCEGPCVEGCQCDAGFVLSADRCVPLNNGC) is the TIL 7 domain. Residues 3271 to 3454 (AECQAWGDPH…VSKPCPSPCT (184 aa)) enclose the VWFD 8 domain. Cystine bridges form between Cys3273/Cys3412 and Cys3295/Cys3453. The TIL 8 domain maps to 3538-3591 (CPAHSHYELCGDSCPGSCPSLSAPEGCESACREGCVCDAGFVLSGDTCVPVGQC). A VWFD 9 domain is found at 3652–3831 (TTCQASGDPH…EEVVPDSPCL (180 aa)). 2 cysteine pairs are disulfide-bonded: Cys3654–Cys3792 and Cys3676–Cys3830. N-linked (GlcNAc...) asparagine glycosylation is present at Asn3719. In terms of domain architecture, TIL 9 spans 3934-3987 (CPQNSHYELCADTCSLGCSALSAPLQCPDGCAEGCQCDSGFLYNGQACVPIQQC). One can recognise a VWFD 10 domain in the interval 4073 to 4256 (ATCWLWGDPH…RAPGWDPLCW (184 aa)). Intrachain disulfides connect Cys4075/Cys4217, Cys4097/Cys4255, and Cys4106/Cys4214. Asn4145 is a glycosylation site (N-linked (GlcNAc...) asparagine). A TIL 10 domain is found at 4352-4409 (CPENSHYEVCGPPCPASCPSPAPLTTPAVCEGPCVEGCQCDAGFVLSADRCVPLNNGC). The VWFD 11 domain maps to 4472-4655 (AECQAWGDPH…VSKPCPSPCT (184 aa)). 2 cysteine pairs are disulfide-bonded: Cys4474-Cys4613 and Cys4496-Cys4654. An N-linked (GlcNAc...) asparagine glycan is attached at Asn4540. One can recognise a TIL 11 domain in the interval 4739-4792 (CPAHSHYELCGDSCPVSCPSLSAPEGCESACREGCVCDAGFVLSGDTCVPVGQC). Positions 4854–5025 (GRCLANGGIH…RAPGSSKGCG (172 aa)) constitute a VWFD 12 domain. Disulfide bonds link Cys4856–Cys4986 and Cys4878–Cys5024. Residues 5121 to 5174 (CPAHSHYSICTRTCQGSCAALSGLTGCTTRCFEGCECDDRFLLSQGVCIPVQDC) enclose the TIL 12 domain. Residues 5233 to 5404 (GLCVLSVGAN…WRAQDFSPCY (172 aa)) form the VWFD 13 domain. A disulfide bridge links Cys5235 with Cys5372.

In terms of assembly, interacts with the Fc portion of IgG and with MUC2. As to expression, mainly expressed in placenta and colon epithelium. Expressed in thyroid, and down-regulated in thyroid carcinomas. Present in serum, with higher levels in patients with various autoimmune diseases (at protein level).

It is found in the secreted. May be involved in the maintenance of the mucosal structure as a gel-like component of the mucosa. The protein is IgGFc-binding protein (FCGBP) of Homo sapiens (Human).